Reading from the N-terminus, the 130-residue chain is Small ribosomal subunit protein uS9 (130 aa).

The disordered stretch occupies residues 107–130; sequence DSRKVERKKPGLKKARKASQFSKR. The segment covering 111-130 has biased composition (basic residues); the sequence is VERKKPGLKKARKASQFSKR.

The protein belongs to the universal ribosomal protein uS9 family.

The chain is Small ribosomal subunit protein uS9 from Streptococcus sanguinis (strain SK36).